The chain runs to 244 residues: 1-(5-phosphoribosyl)-5-[(5-phosphoribosylamino)methylideneamino] imidazole-4-carboxamide isomerase (244 aa).

Aspartate 9 acts as the Proton acceptor in catalysis. Aspartate 131 functions as the Proton donor in the catalytic mechanism.

It belongs to the HisA/HisF family.

It localises to the cytoplasm. It catalyses the reaction 1-(5-phospho-beta-D-ribosyl)-5-[(5-phospho-beta-D-ribosylamino)methylideneamino]imidazole-4-carboxamide = 5-[(5-phospho-1-deoxy-D-ribulos-1-ylimino)methylamino]-1-(5-phospho-beta-D-ribosyl)imidazole-4-carboxamide. It functions in the pathway amino-acid biosynthesis; L-histidine biosynthesis; L-histidine from 5-phospho-alpha-D-ribose 1-diphosphate: step 4/9. The protein is 1-(5-phosphoribosyl)-5-[(5-phosphoribosylamino)methylideneamino] imidazole-4-carboxamide isomerase of Campylobacter jejuni subsp. doylei (strain ATCC BAA-1458 / RM4099 / 269.97).